A 241-amino-acid chain; its full sequence is Probable 2-phosphosulfolactate phosphatase (241 aa).

This sequence belongs to the ComB family. Mg(2+) serves as cofactor.

The enzyme catalyses (2R)-O-phospho-3-sulfolactate + H2O = (2R)-3-sulfolactate + phosphate. The chain is Probable 2-phosphosulfolactate phosphatase from Microcystis aeruginosa (strain NIES-843 / IAM M-2473).